A 201-amino-acid polypeptide reads, in one-letter code: Small ribosomal subunit protein uS4c (201 aa).

Residues 89–152 enclose the S4 RNA-binding domain; the sequence is MRLDNILFRL…NSRTLVQNLI (64 aa).

This sequence belongs to the universal ribosomal protein uS4 family. In terms of assembly, part of the 30S ribosomal subunit. Contacts protein S5. The interaction surface between S4 and S5 is involved in control of translational fidelity.

It is found in the plastid. The protein localises to the chloroplast. Functionally, one of the primary rRNA binding proteins, it binds directly to 16S rRNA where it nucleates assembly of the body of the 30S subunit. Its function is as follows. With S5 and S12 plays an important role in translational accuracy. In Crucihimalaya wallichii (Rock-cress), this protein is Small ribosomal subunit protein uS4c (rps4).